The primary structure comprises 72 residues: Translation initiation factor IF-1 2 (72 aa).

Positions 1–72 constitute an S1-like domain; sequence MAKEDVIEMQ…TKGRIVFRTK (72 aa).

This sequence belongs to the IF-1 family. As to quaternary structure, component of the 30S ribosomal translation pre-initiation complex which assembles on the 30S ribosome in the order IF-2 and IF-3, IF-1 and N-formylmethionyl-tRNA(fMet); mRNA recruitment can occur at any time during PIC assembly.

The protein resides in the cytoplasm. Its function is as follows. One of the essential components for the initiation of protein synthesis. Stabilizes the binding of IF-2 and IF-3 on the 30S subunit to which N-formylmethionyl-tRNA(fMet) subsequently binds. Helps modulate mRNA selection, yielding the 30S pre-initiation complex (PIC). Upon addition of the 50S ribosomal subunit IF-1, IF-2 and IF-3 are released leaving the mature 70S translation initiation complex. The chain is Translation initiation factor IF-1 2 from Azoarcus sp. (strain BH72).